The sequence spans 227 residues: Ribonuclease S-5 (227 aa).

The signal sequence occupies residues 1-27 (MGITGMVYVVTMVFLLIVLILSSSTVG). Residue Gln36 coordinates RNA. An intrachain disulfide couples Cys42 to Cys49. Asn45 carries an N-linked (GlcNAc...) asparagine glycan. RNA-binding positions include His60, 97-98 (NV), Phe107, 110-111 (KE), and 114-115 (KH). His60 functions as the Proton donor in the catalytic mechanism. Cysteines 75 and 118 form a disulfide. Glu111 is a catalytic residue. His115 acts as the Proton acceptor in catalysis. A glycan (N-linked (GlcNAc...) asparagine) is linked at Asn143. Intrachain disulfides connect Cys182–Cys220 and Cys197–Cys208.

Belongs to the RNase T2 family. Post-translationally, N-glycan at Asn-45 consists of disaccharide (GlcNAc-GlcNAc). N-linked core structure at Asn-143 contains xylose.

The enzyme catalyses a ribonucleotidyl-ribonucleotide-RNA + H2O = a 3'-end 3'-phospho-ribonucleotide-RNA + a 5'-end dephospho-ribonucleoside-RNA + H(+). In terms of biological role, self-incompatibility (SI) is the inherited ability of a flowering plant to prevent self-fertilization by discriminating between self and non-self pollen during pollination. In many species, self-incompatibility is controlled by the single, multiallelic locus S. In Pyrus pyrifolia (Chinese pear), this protein is Ribonuclease S-5.